The following is a 1269-amino-acid chain: Protein cramped-like (1269 aa).

A compositionally biased stretch (gly residues) spans 1-12 (MTVKLGDGGSGE). Residues 1-165 (MTVKLGDGGS…GKKVRRQWES (165 aa)) are disordered. Basic and acidic residues-rich tracts occupy residues 13–24 (DGLKKLGKRAAD) and 43–52 (SGTKRDEKTP). A compositionally biased stretch (pro residues) spans 59-74 (PPAPPGAPQAPSPPQG). Residues 105-123 (GNAGGSGPRGKGAEGGGSS) show a composition bias toward gly residues. Low complexity predominate over residues 124-147 (SGNVSGVAPAAPAGGSRSSSRNLG). The span at 151–165 (GEKEEGKKVRRQWES) shows a compositional bias: basic and acidic residues. The 64-residue stretch at 161 to 224 (RQWESWSTED…FYYRTWHKIT (64 aa)) folds into the SANT domain. S307 is subject to Phosphoserine. 6 disordered regions span residues 450–541 (IQSG…PGAL), 581–666 (DTRP…EVPA), 757–827 (VRPA…NDSD), 976–1034 (EGLS…DSFQ), 1055–1092 (IPLS…SQGE), and 1115–1157 (VPLS…PSDS). Over residues 485-507 (SSGESSPESAPGEGAALSLSSPD) the composition is skewed to low complexity. Basic and acidic residues-rich tracts occupy residues 508–518 (APDRPPPRHQD) and 526–535 (TPAEGRDSPT). Polar residues-rich tracts occupy residues 757-767 (VRPAQEEQSMT), 774-806 (TVSS…SSGL), and 982-1002 (SPLS…TGTH). 2 stretches are compositionally biased toward low complexity: residues 1055-1070 (IPLS…LSPP) and 1125-1140 (SDSS…SPQP). S1268 is modified (phosphoserine).

Belongs to the cramped family.

The protein localises to the nucleus. The polypeptide is Protein cramped-like (Homo sapiens (Human)).